The following is a 912-amino-acid chain: Protein translocase subunit SecA (912 aa).

ATP-binding positions include Q87, 105-109 (GEGKT), and D508. Residues 864 to 912 (AEEEVEQMQGGNAPVPVSQVTRDEPKVGRNDPCPCGSGKKYKHCHGQLS) are disordered. Zn(2+)-binding residues include C896, C898, C907, and H908. Basic residues predominate over residues 902 to 912 (KKYKHCHGQLS).

The protein belongs to the SecA family. Monomer and homodimer. Part of the essential Sec protein translocation apparatus which comprises SecA, SecYEG and auxiliary proteins SecDF-YajC and YidC. Zn(2+) serves as cofactor.

The protein localises to the cell inner membrane. Its subcellular location is the cytoplasm. It carries out the reaction ATP + H2O + cellular proteinSide 1 = ADP + phosphate + cellular proteinSide 2.. Functionally, part of the Sec protein translocase complex. Interacts with the SecYEG preprotein conducting channel. Has a central role in coupling the hydrolysis of ATP to the transfer of proteins into and across the cell membrane, serving both as a receptor for the preprotein-SecB complex and as an ATP-driven molecular motor driving the stepwise translocation of polypeptide chains across the membrane. The chain is Protein translocase subunit SecA from Xanthomonas euvesicatoria pv. vesicatoria (strain 85-10) (Xanthomonas campestris pv. vesicatoria).